Here is a 333-residue protein sequence, read N- to C-terminus: Gramillins biosynthetic cluster protein FGSG_00039 (333 aa).

Its pathway is mycotoxin biosynthesis. Part of the gene cluster that mediates the biosynthesis of gramillins A and B, bicyclic lipopeptides that induce cell death in maize leaves but not in wheat leaves. The nonribosomal peptide synthetase GRA1 incorporates respectively a glutamic adic (Glu), a leucine (Leu), a serine (Ser), a hydroxyglutamine (HOGln), a 2-amino decanoic acid, and 2 cysteins (CysB and CysA). The biosynthesis of 2-amino decanoic acid incorporated in gramillins could be initiated by a fatty acid synthase composed of the alpha and beta subunits FGSG_00036 and FGSG_11656. The cytochrome P450 monooxygenase FGSG_15680 could hydroxylate the fatty acid chain. Subsequent oxidation to the ketone by the oxidoreductase FGSG_00048 and transamination by aminotransferase FGSG_00049 could form 2-amino-decanoic acid. On the other hand, FGSG_15680 could also be responsible for the HO-modified glutamine at the gamma-position. Whether hydroxylation occurs on the fully assembled product or on the Gln residue prior to assembly into the gramillins requires further proof. The thioredoxin FGSG_00043 could also be required for the disulfide-bond formation between CysA and CysB. The specific involvement of the remaining proteins from the cluster is more difficult to discern, but could have broader regulatory (FGSG_00040 and FGSG_11657) or enzymatic functions (FGSG_00044 and FGSG_00045). The final C-domain of GRA1 does not possess the expected sequence of a termination CT domain, often implicated in macrocyclization and release of a cyclopeptidein fungal NRPs; and the thioesterase FGSG_00047 may act in concert with the terminal C-domain of GRA1 to catalyze the formation of the macrocyclic anhydride and release of the products. This is Gramillins biosynthetic cluster protein FGSG_00039 from Gibberella zeae (strain ATCC MYA-4620 / CBS 123657 / FGSC 9075 / NRRL 31084 / PH-1) (Wheat head blight fungus).